The sequence spans 372 residues: Glutamate 5-kinase (372 aa).

K14 contributes to the ATP binding site. Substrate contacts are provided by S54, D141, and N153. T173–D174 lines the ATP pocket. The region spanning A280–V358 is the PUA domain.

Belongs to the glutamate 5-kinase family.

The protein resides in the cytoplasm. The catalysed reaction is L-glutamate + ATP = L-glutamyl 5-phosphate + ADP. The protein operates within amino-acid biosynthesis; L-proline biosynthesis; L-glutamate 5-semialdehyde from L-glutamate: step 1/2. Catalyzes the transfer of a phosphate group to glutamate to form L-glutamate 5-phosphate. In Janthinobacterium sp. (strain Marseille) (Minibacterium massiliensis), this protein is Glutamate 5-kinase.